The following is a 309-amino-acid chain: Potassium channel subfamily K member 16 (309 aa).

At Met-1–Arg-13 the chain is on the cytoplasmic side. Residues Val-14–Leu-34 traverse the membrane as a helical segment. Residues Ser-98 to Pro-116 constitute an intramembrane region (pore-forming). Positions 108, 109, 110, and 111 each coordinate K(+). The segment at Thr-108–Asn-113 is selectivity filter 1. A helical membrane pass occupies residues Ala-120–Leu-140. Residues Asn-141 to Gln-165 are Cytoplasmic-facing. A helical membrane pass occupies residues Val-166–Phe-186. Residues Gly-202–Gly-221 constitute an intramembrane region (pore-forming). Residues Thr-212, Ile-213, Gly-214, and Phe-215 each contribute to the K(+) site. The interval Thr-212–Asp-217 is selectivity filter 2. The helical transmembrane segment at Ile-238–Leu-258 threads the bilayer. Topologically, residues His-259 to Ser-309 are cytoplasmic.

Belongs to the two pore domain potassium channel (TC 1.A.1.8) family. As to quaternary structure, homodimer; disulfide-linked. Heterodimer with KCNK17 and KCNK5. In terms of tissue distribution, highly expressed in pancreas, in both endocrine (alpha, beta, gamma, delta, and epsilon) and exocrine (acinar and ductal) cells. Expressed in pacreatic beta-cells (at protein level). Expressed in pacreatic delta-cells (at protein level). Not detectable in the other tissues tested.

The protein localises to the endoplasmic reticulum membrane. The protein resides in the cell membrane. Its subcellular location is the mitochondrion inner membrane. The enzyme catalyses K(+)(in) = K(+)(out). It carries out the reaction Rb(+)(in) = Rb(+)(out). It catalyses the reaction Cs(+)(in) = Cs(+)(out). With respect to regulation, the channel conductance is stimulated by extracellular alkaline pH. Inhibited by Ba(2+) ions, quinine, quinidine, chloroform and halothane. Its function is as follows. K(+) channel that conducts voltage-dependent outward rectifying currents upon membrane depolarization. Voltage sensing is coupled to K(+) electrochemical gradient in an 'ion flux gating' mode where outward but not inward ion flow opens the gate. Homo- and heterodimerizes to form functional channels with distinct regulatory and gating properties. In pancreatic islets, conducts K(+) countercurrents for Ca(2+) release from the endoplasmic reticulum (ER) and regulates the frequency and duration of cytosolic Ca(2+) oscillations coupled to secretion of pancreatic hormones. In pancreatic beta cells, drives ER Ca(2+) efflux, which in turn activates Ca(2+)-dependent plasma membrane K(+) slow currents and cytosolic Ca(2+) influx, overall contributing to synchronous cytosolic Ca(2+) oscillations. Limits glucose-induced cytosolic Ca(2+) oscillations coupled to second-phase INS secretion. Contributes to beta cell adaptation to acute inflammation by maintaining normal cytosolic Ca(2+) levels and INS secretion. May regulate beta cell mitochondrial Ca(2+) levels either indirectly via ER Ca(2+) efflux or directly by hyperpolarizing the mitochondrial membrane potential. Limits mitochondrial Ca(2+) oscillations and ATP production involved in glucose homeostasis upon metabolic stress. In pancreatic delta cells, limits Ca(2+)-induced Ca(2+)-release involved in somatostatin secretion and modulates islet paracrine signaling involved in glucagon secretion. Permeable to other monovalent cations such as Rb(+) and Cs(+). In Homo sapiens (Human), this protein is Potassium channel subfamily K member 16.